Here is a 79-residue protein sequence, read N- to C-terminus: MKLTCVLIITVLFLTASQLITADYSRDQRQYRAVRLGDEMRNFKGARDCGGQGEGCYTQPCCPGLRCRGGGTGGGACQL.

Positions 1-22 (MKLTCVLIITVLFLTASQLITA) are cleaved as a signal peptide. The propeptide occupies 23-47 (DYSRDQRQYRAVRLGDEMRNFKGAR). 3 disulfides stabilise this stretch: cysteine 49–cysteine 62, cysteine 56–cysteine 67, and cysteine 61–cysteine 77. Proline 60 and proline 63 each carry 4-hydroxyproline.

It belongs to the conotoxin O1 superfamily. Expressed by the venom duct.

The protein localises to the secreted. Ion channel inhibitor that inhibits the increase in intracellular calcium upon depolarization in DRG neurons. In vivo, both intraperitoneal and intracranial injections into mice induce hyperactivity. This is Conotoxin Vi6.3 from Conus virgo (Virgin cone).